Here is a 348-residue protein sequence, read N- to C-terminus: Alpha-2-HS-glycoprotein (348 aa).

The signal sequence occupies residues 1–18 (MKTLVLLLCFTLLWGCQS). Positions 19–133 (APQGTGLGFR…QFSVMHTKCH (115 aa)) constitute a Cystatin fetuin-A-type 1 domain. 6 disulfide bridges follow: Cys-32–Cys-339, Cys-89–Cys-100, Cys-114–Cys-132, Cys-146–Cys-149, Cys-208–Cys-219, and Cys-230–Cys-247. An N-linked (GlcNAc...) asparagine glycan is attached at Asn-99. Phosphoserine occurs at positions 134 and 138. Residues 144–255 (KVCPHCALLT…TCTAFPTQAN (112 aa)) form the Cystatin fetuin-A-type 2 domain. Asn-156 and Asn-176 each carry an N-linked (GlcNAc...) asparagine glycan. Ser-307, Ser-311, Ser-314, and Ser-316 each carry phosphoserine.

It belongs to the fetuin family. Post-translationally, phosphorylated by FAM20C in the extracellular medium. As to expression, expressed by the liver and secreted in plasma.

The protein localises to the secreted. The sequence is that of Alpha-2-HS-glycoprotein (AHSG) from Meriones unguiculatus (Mongolian jird).